The sequence spans 91 residues: MGIFDWKHWIVILIVVVLVFGTKKLKGLGTDVGESIKGFRKAMHDDDKPAEQPAPQPQQAQPAPQGSPLNQPHTIDAQAHKVDEPIRKDQV.

The chain crosses the membrane as a helical span at residues 1–21 (MGIFDWKHWIVILIVVVLVFG). The tract at residues 42–91 (AMHDDDKPAEQPAPQPQQAQPAPQGSPLNQPHTIDAQAHKVDEPIRKDQV) is disordered. Positions 51 to 64 (EQPAPQPQQAQPAP) are enriched in low complexity. Over residues 78-91 (QAHKVDEPIRKDQV) the composition is skewed to basic and acidic residues.

This sequence belongs to the TatA/E family. In terms of assembly, the Tat system comprises two distinct complexes: a TatABC complex, containing multiple copies of TatA, TatB and TatC subunits, and a separate TatA complex, containing only TatA subunits. Substrates initially bind to the TatABC complex, which probably triggers association of the separate TatA complex to form the active translocon.

The protein resides in the cell inner membrane. In terms of biological role, part of the twin-arginine translocation (Tat) system that transports large folded proteins containing a characteristic twin-arginine motif in their signal peptide across membranes. TatA could form the protein-conducting channel of the Tat system. This is Sec-independent protein translocase protein TatA from Pseudomonas syringae pv. tomato (strain ATCC BAA-871 / DC3000).